The following is a 557-amino-acid chain: DNA ligase B (557 aa).

Lys125 functions as the N6-AMP-lysine intermediate in the catalytic mechanism.

This sequence belongs to the NAD-dependent DNA ligase family. LigB subfamily.

It catalyses the reaction NAD(+) + (deoxyribonucleotide)n-3'-hydroxyl + 5'-phospho-(deoxyribonucleotide)m = (deoxyribonucleotide)n+m + AMP + beta-nicotinamide D-nucleotide.. In terms of biological role, catalyzes the formation of phosphodiester linkages between 5'-phosphoryl and 3'-hydroxyl groups in double-stranded DNA using NAD as a coenzyme and as the energy source for the reaction. This Pseudomonas entomophila (strain L48) protein is DNA ligase B.